The sequence spans 186 residues: Serine hydrolase RBBP9 (186 aa).

The segment at 63–67 (LHCDE) is involved in binding to RB1. Catalysis depends on charge relay system residues Ser-75, Asp-138, and His-165.

It belongs to the RBBP9 family. As to quaternary structure, interacts with RB1; the interaction disrupts RB1 binding to E2F1. Interacts with RBL1 and RBL2. In terms of tissue distribution, highly expressed in the spleen, testis and kidney. Also found in the heart, liver, lung and brain.

The catalysed reaction is valacyclovir + H2O = acyclovir + L-valine + H(+). Its function is as follows. Serine hydrolase. Catalyzes the hydrolytic activation of amino acid ester of the antiviral prodrug valacyclovir to its corresponding active drug, acyclovir. May negatively regulate basal or autocrine TGF-beta signaling by suppressing SMAD2-SMAD3 phosphorylation. May play a role in the transformation process due to its capacity to confer resistance to the growth-inhibitory effects of TGF-beta through interaction with RB1 and the subsequent displacement of E2F1. This is Serine hydrolase RBBP9 from Rattus norvegicus (Rat).